The primary structure comprises 462 residues: 3-ketoacyl-CoA thiolase 2, peroxisomal (462 aa).

A peroxisome-targeting transit peptide spans 1-34 (MEKAIERQRVLLEHLRPSSSSSHNYEASLSASAC). The Acyl-thioester intermediate role is filled by cysteine 138. The cysteines at positions 138 and 192 are disulfide-linked. Active-site proton acceptor residues include histidine 393 and cysteine 425.

Belongs to the thiolase-like superfamily. Thiolase family. In terms of assembly, forms homodimers. In terms of tissue distribution, accumulates in etiolated cotyledons and in seedlings, also present in roots, flowers and siliques (at protein level). High levels in wounded leaves.

The protein resides in the peroxisome. It is found in the glyoxysome. The enzyme catalyses an acyl-CoA + acetyl-CoA = a 3-oxoacyl-CoA + CoA. The protein operates within lipid metabolism; fatty acid metabolism. Involved in long chain fatty-acid beta-oxidation prior to gluconeogenesis during germination and subsequent seedling growth. Confers sensitivity to 2,4-dichlorophenoxybutiric acid (2,4-DB). Required for local and systemic induction of jasmonic acid (JA) biosynthesis after wounding. Seems to be involved in JA biosynthesis during senescence. May be involved in the positive regulation of abscisic acid-activated signaling pathway. This Arabidopsis thaliana (Mouse-ear cress) protein is 3-ketoacyl-CoA thiolase 2, peroxisomal (PED1).